Here is a 117-residue protein sequence, read N- to C-terminus: Large ribosomal subunit protein bL19 (117 aa).

This sequence belongs to the bacterial ribosomal protein bL19 family.

Functionally, this protein is located at the 30S-50S ribosomal subunit interface and may play a role in the structure and function of the aminoacyl-tRNA binding site. This Desulfotalea psychrophila (strain LSv54 / DSM 12343) protein is Large ribosomal subunit protein bL19.